The following is a 573-amino-acid chain: MLO-like protein 11 (573 aa).

At 1–19 (MGEGEENGNEADSNERSLA) the chain is on the extracellular side. The chain crosses the membrane as a helical span at residues 20-40 (LSPTWSVAIVLTVFVVVSLIV). Residues 41-69 (ERSIYRLSTWLRKTKRKPMFAALEKMKEE) lie on the Cytoplasmic side of the membrane. Residues 70–90 (LMLLGFISLLLTATSSTIANI) traverse the membrane as a helical segment. Residues 91–163 (CVPSSFYNDR…SYEGLEQLHR (73 aa)) are Extracellular-facing. The chain crosses the membrane as a helical span at residues 164–184 (FIFIMAVTHVTYSCLTMLLAI). At 185 to 287 (VKIHSWRIWE…IRSMEEEFQR (103 aa)) the chain is on the cytoplasmic side. Helical transmembrane passes span 288–308 (IVGV…FNIK) and 309–329 (GSNL…LVGA). Residues 330–371 (KLQHVIATLALENAGLTEYPSGVKLRPRDELFWFNKPELLLS) are Cytoplasmic-facing. A helical transmembrane segment spans residues 372-392 (LIHFILFQNSFELASFFWFWW). Topologically, residues 393–411 (QFGYSSCFLKNHYLVYFRL) are extracellular. A helical membrane pass occupies residues 412–432 (LLGFAGQFLCSYSTLPLYALV). Residues 433–573 (TQMGTNYKAA…SSSLPSEKRV (141 aa)) lie on the Cytoplasmic side of the membrane. Positions 446-467 (QRIRETIRGWGKATRRKRRHGL) are calmodulin-binding. 2 disordered regions span residues 500-532 (EQQR…TSSR) and 554-573 (RSEP…EKRV). The segment covering 507–516 (EQGTTELELQ) has biased composition (low complexity). Polar residues predominate over residues 561–573 (LSRSSSLPSEKRV).

This sequence belongs to the MLO family.

It is found in the membrane. In terms of biological role, may be involved in modulation of pathogen defense and leaf cell death. Activity seems to be regulated by Ca(2+)-dependent calmodulin binding and seems not to require heterotrimeric G proteins. The polypeptide is MLO-like protein 11 (MLO11) (Arabidopsis thaliana (Mouse-ear cress)).